The following is a 336-amino-acid chain: Holliday junction branch migration complex subunit RuvB (336 aa).

Residues 1-182 (MKERIVNLET…FGMSFRMQFY (182 aa)) are large ATPase domain (RuvB-L). ATP contacts are provided by residues Leu-21, Arg-22, Gly-63, Lys-66, Thr-67, Ser-68, 129–131 (EDF), Arg-172, Tyr-182, and Arg-219. Thr-67 is a Mg(2+) binding site. The tract at residues 183 to 253 (SPSELALIIK…ITLHALNELG (71 aa)) is small ATPAse domain (RuvB-S). The head domain (RuvB-H) stretch occupies residues 256 to 336 (ELGFDEADLA…IPTLKSQSLF (81 aa)). DNA-binding residues include Arg-310 and Arg-315.

The protein belongs to the RuvB family. In terms of assembly, homohexamer. Forms an RuvA(8)-RuvB(12)-Holliday junction (HJ) complex. HJ DNA is sandwiched between 2 RuvA tetramers; dsDNA enters through RuvA and exits via RuvB. An RuvB hexamer assembles on each DNA strand where it exits the tetramer. Each RuvB hexamer is contacted by two RuvA subunits (via domain III) on 2 adjacent RuvB subunits; this complex drives branch migration. In the full resolvosome a probable DNA-RuvA(4)-RuvB(12)-RuvC(2) complex forms which resolves the HJ.

Its subcellular location is the cytoplasm. It catalyses the reaction ATP + H2O = ADP + phosphate + H(+). In terms of biological role, the RuvA-RuvB-RuvC complex processes Holliday junction (HJ) DNA during genetic recombination and DNA repair, while the RuvA-RuvB complex plays an important role in the rescue of blocked DNA replication forks via replication fork reversal (RFR). RuvA specifically binds to HJ cruciform DNA, conferring on it an open structure. The RuvB hexamer acts as an ATP-dependent pump, pulling dsDNA into and through the RuvAB complex. RuvB forms 2 homohexamers on either side of HJ DNA bound by 1 or 2 RuvA tetramers; 4 subunits per hexamer contact DNA at a time. Coordinated motions by a converter formed by DNA-disengaged RuvB subunits stimulates ATP hydrolysis and nucleotide exchange. Immobilization of the converter enables RuvB to convert the ATP-contained energy into a lever motion, pulling 2 nucleotides of DNA out of the RuvA tetramer per ATP hydrolyzed, thus driving DNA branch migration. The RuvB motors rotate together with the DNA substrate, which together with the progressing nucleotide cycle form the mechanistic basis for DNA recombination by continuous HJ branch migration. Branch migration allows RuvC to scan DNA until it finds its consensus sequence, where it cleaves and resolves cruciform DNA. This is Holliday junction branch migration complex subunit RuvB from Helicobacter acinonychis (strain Sheeba).